The sequence spans 95 residues: Integration host factor subunit beta (95 aa).

Belongs to the bacterial histone-like protein family. In terms of assembly, heterodimer of an alpha and a beta chain.

This protein is one of the two subunits of integration host factor, a specific DNA-binding protein that functions in genetic recombination as well as in transcriptional and translational control. The polypeptide is Integration host factor subunit beta (Shewanella amazonensis (strain ATCC BAA-1098 / SB2B)).